The following is a 319-amino-acid chain: Acetyl-coenzyme A carboxylase carboxyl transferase subunit alpha (319 aa).

One can recognise a CoA carboxyltransferase C-terminal domain in the interval 35-296 (NIDEEVQRLR…KTQLLADLED (262 aa)).

Belongs to the AccA family. In terms of assembly, acetyl-CoA carboxylase is a heterohexamer composed of biotin carboxyl carrier protein (AccB), biotin carboxylase (AccC) and two subunits each of ACCase subunit alpha (AccA) and ACCase subunit beta (AccD).

It is found in the cytoplasm. It carries out the reaction N(6)-carboxybiotinyl-L-lysyl-[protein] + acetyl-CoA = N(6)-biotinyl-L-lysyl-[protein] + malonyl-CoA. It participates in lipid metabolism; malonyl-CoA biosynthesis; malonyl-CoA from acetyl-CoA: step 1/1. Its function is as follows. Component of the acetyl coenzyme A carboxylase (ACC) complex. First, biotin carboxylase catalyzes the carboxylation of biotin on its carrier protein (BCCP) and then the CO(2) group is transferred by the carboxyltransferase to acetyl-CoA to form malonyl-CoA. In Edwardsiella ictaluri (strain 93-146), this protein is Acetyl-coenzyme A carboxylase carboxyl transferase subunit alpha.